The sequence spans 354 residues: Uroporphyrinogen decarboxylase (354 aa).

Substrate is bound by residues 27 to 31 (RQAGR), Asp-77, Tyr-154, Thr-209, and His-327.

This sequence belongs to the uroporphyrinogen decarboxylase family. Homodimer.

It localises to the cytoplasm. The enzyme catalyses uroporphyrinogen III + 4 H(+) = coproporphyrinogen III + 4 CO2. It functions in the pathway porphyrin-containing compound metabolism; protoporphyrin-IX biosynthesis; coproporphyrinogen-III from 5-aminolevulinate: step 4/4. Its function is as follows. Catalyzes the decarboxylation of four acetate groups of uroporphyrinogen-III to yield coproporphyrinogen-III. The chain is Uroporphyrinogen decarboxylase from Serratia proteamaculans (strain 568).